A 291-amino-acid polypeptide reads, in one-letter code: Glutathione S-transferase 2 (291 aa).

The GST N-terminal domain maps to 2 to 83; that stretch reads SPVKVFGHPM…YILRKYGGTA (82 aa). Glutathione contacts are provided by residues 41-42, 54-55, and 67-68; these read HK, KM, and KS. Residues 93 to 223 enclose the GST C-terminal domain; that stretch reads GIEELAMVDV…RVCKHMPTEF (131 aa).

It belongs to the GST superfamily. Phi family.

The catalysed reaction is RX + glutathione = an S-substituted glutathione + a halide anion + H(+). Functionally, conjugation of reduced glutathione to a wide number of exogenous and endogenous hydrophobic electrophiles. This chain is Glutathione S-transferase 2 (GSTA2), found in Triticum aestivum (Wheat).